The following is a 635-amino-acid chain: Sodium-dependent multivitamin transporter (635 aa).

The next 3 membrane-spanning stretches (helical) occupy residues F24–L44, C68–V88, and F101–F121. N138 carries an N-linked (GlcNAc...) asparagine glycan. Transmembrane regions (helical) follow at residues V143–A163, L176–L196, V199–I219, F256–A276, V297–A317, F336–I356, I396–I416, I428–F448, and A456–V476. N489 and N498 each carry an N-linked (GlcNAc...) asparagine glycan. A helical transmembrane segment spans residues L528–L548.

This sequence belongs to the sodium:solute symporter (SSF) (TC 2.A.21) family. In terms of assembly, interacts with PDZD11. In terms of processing, may be glycosylated. In terms of tissue distribution, expressed in microvessels of the brain (at protein level). Expressed in heart, brain, placenta, lung, liver, skeletal muscle, kidney, and pancreas.

Its subcellular location is the cell membrane. The protein resides in the apical cell membrane. The enzyme catalyses biotin(out) + 2 Na(+)(out) = biotin(in) + 2 Na(+)(in). It catalyses the reaction (R)-pantothenate(out) + 2 Na(+)(out) = (R)-pantothenate(in) + 2 Na(+)(in). The catalysed reaction is (R)-lipoate(out) + 2 Na(+)(out) = (R)-lipoate(in) + 2 Na(+)(in). It carries out the reaction iodide(out) + 2 Na(+)(out) = iodide(in) + 2 Na(+)(in). Sodium-dependent multivitamin transporter that mediates the electrogenic transport of pantothenate, biotin, lipoate and iodide. Functions as a Na(+)-coupled substrate symporter where the stoichiometry of Na(+):substrate is 2:1, creating an electrochemical Na(+) gradient used as driving force for substrate uptake. Required for biotin and pantothenate uptake in the intestine across the brush border membrane. Plays a role in the maintenance of intestinal mucosa integrity, by providing the gut mucosa with biotin. Contributes to the luminal uptake of biotin and pantothenate into the brain across the blood-brain barrier. The protein is Sodium-dependent multivitamin transporter of Homo sapiens (Human).